Here is a 456-residue protein sequence, read N- to C-terminus: Major facilitator superfamily domain-containing protein 10 (456 aa).

Helical transmembrane passes span 25–45 (VIIV…LLLP), 87–107 (VLFG…SAPL), and 114–136 (YLGR…AVWA). An N-linked (GlcNAc...) asparagine glycan is attached at asparagine 159. 8 consecutive transmembrane segments (helical) span residues 179-199 (AVIG…GAFL), 203-223 (MVPW…FCFL), 278-298 (LVYF…SFLA), 311-328 (KMFF…GTYA), 345-365 (LLLV…TLGL), 366-386 (GLML…TMVS), 403-423 (SLGA…YWLT), and 424-444 (GAQV…LLLW).

This sequence belongs to the major facilitator superfamily. In terms of tissue distribution, esxpressed in luminal membrane of renal tubules. Expressed at the surface of eosinophils (at protein level).

It localises to the nucleus inner membrane. Its subcellular location is the cell membrane. In terms of biological role, probable organic anion transporter which may serve as a transporter for some non-steroidal anti-inflammatory drugs (NSAIDs) as well as other organic anions across the luminal membranes of renal proximal tubules at the final excretion step into the urine. This Mus musculus (Mouse) protein is Major facilitator superfamily domain-containing protein 10 (Mfsd10).